A 21-amino-acid chain; its full sequence is Malate dehydrogenase (21 aa).

11–17 (GAAGQIA) contacts NAD(+).

It belongs to the LDH/MDH superfamily. MDH type 2 family.

It carries out the reaction (S)-malate + NAD(+) = oxaloacetate + NADH + H(+). Its function is as follows. Catalyzes the reversible oxidation of malate to oxaloacetate. This is Malate dehydrogenase (mdh) from Vogesella indigofera (Pseudomonas indigofera).